Reading from the N-terminus, the 1383-residue chain is Periaxin (1383 aa).

Ser-7 is modified (phosphoserine). The 84-residue stretch at 16–99 folds into the PDZ domain; the sequence is LVEIIVETEA…YKVSFCLKRT (84 aa). Positions 70–84 match the Nuclear export signal motif; the sequence is VFFENFKYEDALRLL. Residues Ser-133 and Ser-243 each carry the phosphoserine modification. 46 repeat units span residues 432–436, 440–444, 448–452, 456–460, 461–465, 466–470, 474–478, 482–486, 487–491, 492–496, 497–501, 502–506, 507–511, 515–519, 523–527, 531–535, 536–540, 544–548, 549–553, 554–558, 562–566, 567–571, 575–579, 580–584, 585–589, 593–597, 601–605, 606–610, 611–615, 619–623, 627–631, 632–636, 637–641, 645–649, 653–657, 658–662, 663–667, 671–675, 676–680, 684–688, 689–693, 694–698, 699–703, 705–709, 713–717, and 718–722. Residues 432 to 722 form a 46 X 5 AA approximate tandem repeats of [LVMGIE]-[PSM]-[EDKA]-[LIVMA]-[AQKHPRT]; that may have a tripeptide spacer of [ALKD]-[IPV]-[KPH] region; the sequence is GPEVKAPKGP…VPEMKLPKVP (291 aa). Phosphoserine is present on residues Ser-838, Ser-971, Ser-1020, Ser-1271, Ser-1275, Ser-1277, Ser-1285, Ser-1323, and Ser-1329. The tract at residues 1251-1383 is disordered; sequence KVKSPKLRLP…RIEGTQAAAI (133 aa). The span at 1267-1277 shows a compositional bias: low complexity; sequence SESASGEGSPS. A compositionally biased stretch (basic and acidic residues) spans 1346-1355; sequence GSKDREEGGF. Ser-1361 carries the phosphoserine modification.

Belongs to the periaxin family. In terms of assembly, homodimer (via PDZ domain). Interacts with SCN10A. Found in a complex with SCN10A. Interacts with DRP2. Identified in a dystroglycan complex that contains at least PRX, DRP2, UTRN, DMD and DAG1. Detected in a complex composed of at least EZR, AHNAK, PPL and PRX. Identified in a complex with EZR, AHNAK, BFSP1, BFSP2, ANK2, PLEC, VIM and spectrin. In terms of processing, the N-terminus is blocked. Detected in sciatic nerve and in trigeminal nerve Schwann cells. Detected in myelinating Schwann cells in sciatic nerve (at protein level).

Its subcellular location is the nucleus. It is found in the cytoplasm. The protein resides in the cell membrane. It localises to the cell junction. Its function is as follows. Scaffolding protein that functions as part of a dystroglycan complex in Schwann cells, and as part of EZR and AHNAK-containing complexes in eye lens fiber cells. Required for the maintenance of the peripheral myelin sheath that is essential for normal transmission of nerve impulses and normal perception of sensory stimuli. Required for normal transport of MBP mRNA from the perinuclear to the paranodal regions. Required for normal remyelination after nerve injury. Required for normal elongation of Schwann cells and normal length of the internodes between the nodes of Ranvier. The demyelinated nodes of Ranvier permit saltatory transmission of nerve impulses; shorter internodes cause slower transmission of nerve impulses. Required for the formation of appositions between the abaxonal surface of the myelin sheath and the Schwann cell plasma membrane; the Schwann cell cytoplasm is restricted to regions between these appositions. Required for the formation of Cajal bands and of Schmidt-Lanterman incisures that correspond to short, cytoplasm-filled regions on myelinated nerves. Recruits DRP2 to the Schwann cell plasma membrane. Required for normal protein composition of the eye lens fiber cell plasma membrane and normal eye lens fiber cell morphology. This chain is Periaxin (Prx), found in Rattus norvegicus (Rat).